Reading from the N-terminus, the 77-residue chain is Acyl carrier protein (77 aa).

The Carrier domain maps to M1–E76. An O-(pantetheine 4'-phosphoryl)serine modification is found at S36.

It belongs to the acyl carrier protein (ACP) family. 4'-phosphopantetheine is transferred from CoA to a specific serine of apo-ACP by AcpS. This modification is essential for activity because fatty acids are bound in thioester linkage to the sulfhydryl of the prosthetic group.

The protein resides in the cytoplasm. It functions in the pathway lipid metabolism; fatty acid biosynthesis. Functionally, carrier of the growing fatty acid chain in fatty acid biosynthesis. The chain is Acyl carrier protein from Staphylococcus aureus (strain Mu3 / ATCC 700698).